The chain runs to 170 residues: Translationally-controlled tumor protein homolog (170 aa).

The TCTP domain maps to 1 to 170 (MLIYSDIITG…WKHGLKETKV (170 aa)).

It belongs to the TCTP family.

It localises to the cytoplasm. Its subcellular location is the cytoskeleton. In terms of biological role, involved in protein synthesis. Involved in microtubule stabilization. The chain is Translationally-controlled tumor protein homolog from Neurospora crassa (strain ATCC 24698 / 74-OR23-1A / CBS 708.71 / DSM 1257 / FGSC 987).